A 278-amino-acid polypeptide reads, in one-letter code: Small ribosomal subunit protein uS2 (278 aa).

The tract at residues 235–278 (AEAAEEAPKRERKAKAAVKKERTKKEDDDALNANVAGKFAKDEE) is disordered. The segment covering 252-261 (VKKERTKKED) has biased composition (basic and acidic residues).

Belongs to the universal ribosomal protein uS2 family.

This Parabacteroides distasonis (strain ATCC 8503 / DSM 20701 / CIP 104284 / JCM 5825 / NCTC 11152) protein is Small ribosomal subunit protein uS2.